The following is a 315-amino-acid chain: S-methyl-5'-thioadenosine phosphorylase (315 aa).

Phosphate is bound by residues Ser22, 65–66, and 98–99; these read RH and SA. Met205 lines the substrate pocket. Ser206 lines the phosphate pocket. Residue 229–231 coordinates substrate; sequence DYD.

The protein belongs to the PNP/MTAP phosphorylase family. MTAP subfamily. Homotrimer.

Its subcellular location is the cytoplasm. It is found in the nucleus. The catalysed reaction is S-methyl-5'-thioadenosine + phosphate = 5-(methylsulfanyl)-alpha-D-ribose 1-phosphate + adenine. It functions in the pathway amino-acid biosynthesis; L-methionine biosynthesis via salvage pathway; S-methyl-5-thio-alpha-D-ribose 1-phosphate from S-methyl-5'-thioadenosine (phosphorylase route): step 1/1. Catalyzes the reversible phosphorylation of S-methyl-5'-thioadenosine (MTA) to adenine and 5-methylthioribose-1-phosphate. Involved in the breakdown of MTA, a major by-product of polyamine biosynthesis. Responsible for the first step in the methionine salvage pathway after MTA has been generated from S-adenosylmethionine. Has broad substrate specificity with 6-aminopurine nucleosides as preferred substrates. This Mycosarcoma maydis (Corn smut fungus) protein is S-methyl-5'-thioadenosine phosphorylase.